A 120-amino-acid polypeptide reads, in one-letter code: Small ribosomal subunit protein uS13 (120 aa).

The interval 93–120 (RKGLPVRGQTTKNNARTRKGKKKTVGSK) is disordered. Residues 107 to 120 (ARTRKGKKKTVGSK) are compositionally biased toward basic residues.

Belongs to the universal ribosomal protein uS13 family. As to quaternary structure, part of the 30S ribosomal subunit. Forms a loose heterodimer with protein S19. Forms two bridges to the 50S subunit in the 70S ribosome.

Located at the top of the head of the 30S subunit, it contacts several helices of the 16S rRNA. In the 70S ribosome it contacts the 23S rRNA (bridge B1a) and protein L5 of the 50S subunit (bridge B1b), connecting the 2 subunits; these bridges are implicated in subunit movement. Contacts the tRNAs in the A and P-sites. The sequence is that of Small ribosomal subunit protein uS13 from Helicobacter acinonychis (strain Sheeba).